An 828-amino-acid chain; its full sequence is G-type lectin S-receptor-like serine/threonine-protein kinase At2g19130 (828 aa).

Positions 1-22 (MVSFLTLTSFFFICFFIHGSSA) are cleaved as a signal peptide. The Bulb-type lectin domain occupies 23–146 (VDTISGDFTL…GSSLSANVLW (124 aa)). Residues 23–439 (VDTISGDFTL…GASGKSNNKG (417 aa)) are Extracellular-facing. Asparagine 85, asparagine 113, asparagine 203, asparagine 234, asparagine 240, and asparagine 255 each carry an N-linked (GlcNAc...) asparagine glycan. The 37-residue stretch at 286-322 (PRQQCQVYRYCGSFGICSDKSEPFCRCPQGFRPMSQK) folds into the EGF-like domain. Intrachain disulfides connect cysteine 290-cysteine 302, cysteine 296-cysteine 310, cysteine 372-cysteine 394, and cysteine 376-cysteine 382. Positions 341-422 (CSRGDINQFF…EGNIFYLRLA (82 aa)) constitute a PAN domain. The helical transmembrane segment at 440–460 (LIFGAVLGSLGVIVLVLLVVI) threads the bilayer. Over 461–828 (LILRYRRRKR…KKMTNDNSSA (368 aa)) the chain is Cytoplasmic. In terms of domain architecture, Protein kinase spans 493 to 770 (KNFSDKLGGG…QVVQILEGVL (278 aa)). ATP contacts are provided by residues 499-507 (LGGGGFGSV) and lysine 521. Position 527 is a phosphoserine (serine 527). The tract at residues 582–600 (VEEKIVLGWKLRFQIALGT) is caM-binding. Aspartate 619 (proton acceptor) is an active-site residue. Residue threonine 653 is modified to Phosphothreonine. The disordered stretch occupies residues 796–828 (ESSSSSSHNSSQNHKHSSSSSSSKKMTNDNSSA). Positions 797-828 (SSSSSSHNSSQNHKHSSSSSSSKKMTNDNSSA) are enriched in low complexity. Serine 815 carries the post-translational modification Phosphoserine.

This sequence belongs to the protein kinase superfamily. Ser/Thr protein kinase family.

It localises to the cell membrane. It catalyses the reaction L-seryl-[protein] + ATP = O-phospho-L-seryl-[protein] + ADP + H(+). It carries out the reaction L-threonyl-[protein] + ATP = O-phospho-L-threonyl-[protein] + ADP + H(+). This chain is G-type lectin S-receptor-like serine/threonine-protein kinase At2g19130, found in Arabidopsis thaliana (Mouse-ear cress).